Reading from the N-terminus, the 762-residue chain is 5-methyltetrahydropteroyltriglutamate--homocysteine methyltransferase (762 aa).

5-methyltetrahydropteroyltri-L-glutamate is bound by residues 18-21 and Lys112; that span reads REWK. Residues 435–437 and Glu488 each bind L-homocysteine; that span reads IGS. L-methionine contacts are provided by residues 435–437 and Glu488; that span reads IGS. 5-methyltetrahydropteroyltri-L-glutamate contacts are provided by residues 519-520 and Trp565; that span reads RC. Asp603 is a binding site for L-homocysteine. Asp603 contributes to the L-methionine binding site. A 5-methyltetrahydropteroyltri-L-glutamate-binding site is contributed by Glu609. Residues His645, Cys647, and Glu669 each contribute to the Zn(2+) site. Catalysis depends on His698, which acts as the Proton donor. Cys719 bears the S-bacillithiol cysteine disulfide mark. Zn(2+) is bound at residue Cys730.

The protein belongs to the vitamin-B12 independent methionine synthase family. The cofactor is Zn(2+). In response to oxidative stress, Cys-719 can react with bacillithiol (BSH) to form mixed disulfides. S-bacillithiolation leads to loss of catalytic activity and methionine auxotrophy.

The enzyme catalyses 5-methyltetrahydropteroyltri-L-glutamate + L-homocysteine = tetrahydropteroyltri-L-glutamate + L-methionine. Its pathway is amino-acid biosynthesis; L-methionine biosynthesis via de novo pathway; L-methionine from L-homocysteine (MetE route): step 1/1. Catalyzes the transfer of a methyl group from 5-methyltetrahydrofolate to homocysteine resulting in methionine formation. The chain is 5-methyltetrahydropteroyltriglutamate--homocysteine methyltransferase from Bacillus subtilis (strain 168).